The chain runs to 507 residues: MSFLNINRFHILCFFLWQFGLFYACQLIFPIFYNFHPGLSCEDPGFNFSKPKCKLSKVEICTELTANCSKWHIEPAPFHSMVQDFKMFCGTKAYDSAWIATIQFIGALVGALVYGHLGDHFGRKPVSFVGISIGIIFGVASGFAPSWEVFAVLLFICGTSVACIMIVFYAYILEFIEPEQRVFLRTFFNWGYARLVFTLVCFICGYWRSAAIATSLLALPILPVLLWLPESPKWYATKNRFQEMKEAEKKISWLSGISYVEREDRRTEKIEEKDTKVYTIRDLFSSWPIAYSTIVVGSLWFSTSVSSFGADLNSGNLAGNFYLSQFVQAAAIALSKLSIFLLDLFIPSFNRQRLHQVPQIIMIACYTTIMALMISPDSDCSSQGSRNLAIIIINIIGTSFIELTWDACYLVAAEIFPTRIRTIGIGTCSLLARIGALLAPQMAYLSEIYPPIPYIIVCSIGIISLLISCFFLPDTKGVDLGALDRNPLEESGDNKEEEISEIQIGTN.

12 helical membrane passes run 11–31 (ILCF…IFPI), 97–117 (AWIA…YGHL), 125–145 (PVSF…GFAP), 149–169 (VFAV…IVFY), 187–207 (FFNW…CGYW), 209–229 (SAAI…LWLP), 283–303 (LFSS…WFST), 326–346 (FVQA…DLFI), 354–374 (LHQV…ALMI), 388–408 (LAII…WDAC), 423–443 (IGIG…PQMA), and 452–472 (IPYI…CFFL).

Belongs to the major facilitator superfamily.

Its subcellular location is the membrane. This is an uncharacterized protein from Caenorhabditis elegans.